The sequence spans 177 residues: Large ribosomal subunit protein uL6 (177 aa).

This sequence belongs to the universal ribosomal protein uL6 family. As to quaternary structure, part of the 50S ribosomal subunit.

Its function is as follows. This protein binds to the 23S rRNA, and is important in its secondary structure. It is located near the subunit interface in the base of the L7/L12 stalk, and near the tRNA binding site of the peptidyltransferase center. In Histophilus somni (strain 2336) (Haemophilus somnus), this protein is Large ribosomal subunit protein uL6.